The sequence spans 155 residues: Ferredoxin-6, chloroplastic (155 aa).

The transit peptide at 1 to 58 (MSTATAPRLPAPRSGASYHYQTTAAPAANTLSFAGHARQAARASGPRLSSRFVASAAA) directs the protein to the chloroplast. Residues 61-152 (HKVKLVGPDG…DCVIHTHKEE (92 aa)) enclose the 2Fe-2S ferredoxin-type domain. Positions 98, 103, 106, and 136 each coordinate [2Fe-2S] cluster.

The protein belongs to the 2Fe2S plant-type ferredoxin family. The cofactor is [2Fe-2S] cluster.

It is found in the plastid. It localises to the chloroplast. Ferredoxins are iron-sulfur proteins that transfer electrons in a wide variety of metabolic reactions. This is Ferredoxin-6, chloroplastic (FDX6) from Zea mays (Maize).